Consider the following 365-residue polypeptide: uncharacterized protein (365 aa).

A Radical SAM core domain is found at 45 to 289 (FSIGKSLTII…LKEVKKSNPK (245 aa)). [4Fe-4S] cluster is bound by residues C60, C68, and C71.

It depends on [4Fe-4S] cluster as a cofactor.

This is an uncharacterized protein from Methanocaldococcus jannaschii (strain ATCC 43067 / DSM 2661 / JAL-1 / JCM 10045 / NBRC 100440) (Methanococcus jannaschii).